The sequence spans 295 residues: Vesicle-associated protein 4-2 (295 aa).

Residues 1–10 are compositionally biased toward basic and acidic residues; it reads MTMTEEKPTS. A disordered region spans residues 1 to 99; that stretch reads MTMTEEKPTS…PSPSVSSVAK (99 aa). Residues 31 to 53 are compositionally biased toward low complexity; the sequence is NAASSAATSPFPSGASSSSTSSH. Basic residues predominate over residues 54–71; that stretch reads LHNHHQHHHQHHHQHHHQ. Over residues 83–98 the composition is skewed to polar residues; that stretch reads GQNQHPTPSPSVSSVA. The region spanning 107 to 229 is the MSP domain; it reads RLKLDPSEKL…KEQILRVIFL (123 aa). The span at 249–263 shows a compositional bias: basic and acidic residues; sequence DAAVEARKKPPEETG. The tract at residues 249–270 is disordered; it reads DAAVEARKKPPEETGPKMIGEG. At Ser-294 the chain carries Phosphoserine.

Belongs to the VAMP-associated protein (VAP) (TC 9.B.17) family.

In terms of biological role, may play a role in vesicle trafficking. This is Vesicle-associated protein 4-2 (PVA42) from Arabidopsis thaliana (Mouse-ear cress).